Consider the following 730-residue polypeptide: Transcription factor verF (730 aa).

The C2H2-type 1 zinc-finger motif lies at 19-41; that stretch reads YECSLCLKRYKRREHLFRHIGSH. The C2H2-type 2; atypical zinc-finger motif lies at 47-69; that stretch reads YQCNSCDGAFQRADVLKRHLRTC. Residues 83–109 constitute a DNA-binding region (zn(2)-C6 fungal-type); sequence CDRCVRQKKACSSHQPCHSCAKKGAQC. Positions 120 to 129 are enriched in polar residues; the sequence is RLSQHSSTNH. The disordered stretch occupies residues 120-151; sequence RLSQHSSTNHTPKDQELSTQFTNPPPPPSTST.

It localises to the nucleus. In terms of biological role, transcription factor; part of the gene cluster that mediates the biosynthesis of the neurotoxin verrucosidin, a methylated alpha-pyrone polyketide that inhibits oxidative phosphorylation in mitochondria and thereby causes neurological diseases. The sequence is that of Transcription factor verF from Penicillium polonicum.